A 473-amino-acid chain; its full sequence is ATP synthase subunit beta (473 aa).

158–165 (GGAGVGKT) is a binding site for ATP.

Belongs to the ATPase alpha/beta chains family. In terms of assembly, F-type ATPases have 2 components, CF(1) - the catalytic core - and CF(0) - the membrane proton channel. CF(1) has five subunits: alpha(3), beta(3), gamma(1), delta(1), epsilon(1). CF(0) has three main subunits: a(1), b(2) and c(9-12). The alpha and beta chains form an alternating ring which encloses part of the gamma chain. CF(1) is attached to CF(0) by a central stalk formed by the gamma and epsilon chains, while a peripheral stalk is formed by the delta and b chains.

The protein resides in the cell membrane. It catalyses the reaction ATP + H2O + 4 H(+)(in) = ADP + phosphate + 5 H(+)(out). Its function is as follows. Produces ATP from ADP in the presence of a proton gradient across the membrane. The catalytic sites are hosted primarily by the beta subunits. In Carboxydothermus hydrogenoformans (strain ATCC BAA-161 / DSM 6008 / Z-2901), this protein is ATP synthase subunit beta.